The following is a 146-amino-acid chain: Hemoglobin subunit beta (146 aa).

Residues 2 to 146 (HWTAEEKQLI…VAHALARKYH (145 aa)) form the Globin domain. Residues His63 and His92 each coordinate heme b.

Belongs to the globin family. Heterotetramer of two alpha chains and two beta chains. In terms of tissue distribution, red blood cells.

Functionally, involved in oxygen transport from the lung to the various peripheral tissues. This chain is Hemoglobin subunit beta (HBB), found in Ara ararauna (Blue-and-yellow macaw).